The sequence spans 158 residues: Cyclic pyranopterin monophosphate synthase (158 aa).

Residues 75–77 (LCH) and 113–114 (ME) each bind substrate. Asp-128 is a catalytic residue.

Belongs to the MoaC family. As to quaternary structure, homohexamer; trimer of dimers.

It catalyses the reaction (8S)-3',8-cyclo-7,8-dihydroguanosine 5'-triphosphate = cyclic pyranopterin phosphate + diphosphate. Its pathway is cofactor biosynthesis; molybdopterin biosynthesis. Its function is as follows. Catalyzes the conversion of (8S)-3',8-cyclo-7,8-dihydroguanosine 5'-triphosphate to cyclic pyranopterin monophosphate (cPMP). This chain is Cyclic pyranopterin monophosphate synthase, found in Azorhizobium caulinodans (strain ATCC 43989 / DSM 5975 / JCM 20966 / LMG 6465 / NBRC 14845 / NCIMB 13405 / ORS 571).